Here is a 284-residue protein sequence, read N- to C-terminus: Tropomyosin-1 (284 aa).

Positions 1-284 (MDGIKKKMIA…DQTFAELTGY (284 aa)) form a coiled coil. Positions 111 to 131 (TKLEEASKTAEESERGRKDLE) are disordered.

The protein belongs to the tropomyosin family. As to quaternary structure, homodimer.

Tropomyosin, in association with the troponin complex, plays a central role in the calcium dependent regulation of muscle contraction. The sequence is that of Tropomyosin-1 from Schistosoma mansoni (Blood fluke).